Here is a 220-residue protein sequence, read N- to C-terminus: Probable septum site-determining protein MinC (220 aa).

It belongs to the MinC family. As to quaternary structure, interacts with MinD and FtsZ.

Functionally, cell division inhibitor that blocks the formation of polar Z ring septums. Rapidly oscillates between the poles of the cell to destabilize FtsZ filaments that have formed before they mature into polar Z rings. Prevents FtsZ polymerization. The chain is Probable septum site-determining protein MinC from Vibrio parahaemolyticus serotype O3:K6 (strain RIMD 2210633).